Here is a 41-residue protein sequence, read N- to C-terminus: Large ribosomal subunit protein bL36 (41 aa).

This sequence belongs to the bacterial ribosomal protein bL36 family.

This is Large ribosomal subunit protein bL36 from Rhodopseudomonas palustris (strain HaA2).